The chain runs to 88 residues: Large ribosomal subunit protein bL31B (88 aa).

This sequence belongs to the bacterial ribosomal protein bL31 family. Type B subfamily. As to quaternary structure, part of the 50S ribosomal subunit.

This is Large ribosomal subunit protein bL31B from Leuconostoc mesenteroides subsp. mesenteroides (strain ATCC 8293 / DSM 20343 / BCRC 11652 / CCM 1803 / JCM 6124 / NCDO 523 / NBRC 100496 / NCIMB 8023 / NCTC 12954 / NRRL B-1118 / 37Y).